The primary structure comprises 469 residues: Neuraminidase (469 aa).

Residues methionine 1–threonine 9 are Intravirion-facing. A helical transmembrane segment spans residues isoleucine 10 to valine 30. The tract at residues glycine 11–valine 33 is involved in apical transport and lipid raft association. Over threonine 31 to isoleucine 469 the chain is Virion surface. The hypervariable stalk region stretch occupies residues histidine 36–serine 88. Asparagine 61, asparagine 70, and asparagine 86 each carry an N-linked (GlcNAc...) asparagine; by host glycan. The segment at glutamine 91–isoleucine 469 is head of neuraminidase. 8 disulfides stabilise this stretch: cysteine 92–cysteine 417, cysteine 124–cysteine 129, cysteine 183–cysteine 230, cysteine 232–cysteine 237, cysteine 278–cysteine 291, cysteine 280–cysteine 289, cysteine 318–cysteine 337, and cysteine 421–cysteine 447. Substrate is bound at residue arginine 118. An N-linked (GlcNAc...) asparagine; by host glycan is attached at asparagine 146. The active-site Proton donor/acceptor is the aspartate 151. Residue arginine 152 participates in substrate binding. 2 N-linked (GlcNAc...) asparagine; by host glycosylation sites follow: asparagine 200 and asparagine 234. Glutamate 276 to glutamate 277 contacts substrate. Residue arginine 292 participates in substrate binding. Ca(2+) is bound by residues aspartate 293, glycine 297, and aspartate 324. The interval proline 326–lysine 350 is disordered. Asparagine 329 is a glycosylation site (N-linked (GlcNAc...) asparagine; by host). The span at serine 331–glutamate 343 shows a compositional bias: polar residues. Substrate is bound at residue arginine 371. Asparagine 402 carries N-linked (GlcNAc...) asparagine; by host glycosylation. The Nucleophile role is filled by tyrosine 406.

Belongs to the glycosyl hydrolase 34 family. In terms of assembly, homotetramer. Ca(2+) serves as cofactor. N-glycosylated.

It is found in the virion membrane. The protein resides in the host apical cell membrane. The enzyme catalyses Hydrolysis of alpha-(2-&gt;3)-, alpha-(2-&gt;6)-, alpha-(2-&gt;8)- glycosidic linkages of terminal sialic acid residues in oligosaccharides, glycoproteins, glycolipids, colominic acid and synthetic substrates.. With respect to regulation, inhibited by the neuraminidase inhibitors zanamivir (Relenza) and oseltamivir (Tamiflu). These drugs interfere with the release of progeny virus from infected cells and are effective against all influenza strains. Resistance to neuraminidase inhibitors is quite rare. Functionally, catalyzes the removal of terminal sialic acid residues from viral and cellular glycoconjugates. Cleaves off the terminal sialic acids on the glycosylated HA during virus budding to facilitate virus release. Additionally helps virus spread through the circulation by further removing sialic acids from the cell surface. These cleavages prevent self-aggregation and ensure the efficient spread of the progeny virus from cell to cell. Otherwise, infection would be limited to one round of replication. Described as a receptor-destroying enzyme because it cleaves a terminal sialic acid from the cellular receptors. May facilitate viral invasion of the upper airways by cleaving the sialic acid moieties on the mucin of the airway epithelial cells. Likely to plays a role in the budding process through its association with lipid rafts during intracellular transport. May additionally display a raft-association independent effect on budding. Plays a role in the determination of host range restriction on replication and virulence. Sialidase activity in late endosome/lysosome traffic seems to enhance virus replication. The sequence is that of Neuraminidase from Influenza A virus (strain A/Kitakyushu/159/1993 H3N2).